A 240-amino-acid polypeptide reads, in one-letter code: Sugar fermentation stimulation protein homolog (240 aa).

This sequence belongs to the SfsA family.

In Saccharolobus islandicus (strain L.S.2.15 / Lassen #1) (Sulfolobus islandicus), this protein is Sugar fermentation stimulation protein homolog.